Here is a 901-residue protein sequence, read N- to C-terminus: MLIKLLTKVFGSRNDRTLRRMRKVVNIINAMEPEMEKLSDEELKGKTAEFRARLEKGEVLENLIPEAFAVVREASKRVFGMRHFDVQLLGGMVLNERCIAEMRTGEGKTLTATLPAYLNALTGKGVHVVTVNDYLAQRDAENNRPLFEFLGLTVGINLPGMPAPAKREAYAADITYGTNNEYGFDYLRDNMAFSPEERVQRKLHYALVDEVDSILIDEARTPLIISGPAEDSSEMYKRVNKIIPHLIRQEKEDSETFQGEGHFSVDEKSRQVNLTERGLVLIEELLVKEGIMDEGESLYSPANIMLMHHVTAALRAHALFTRDVDYIVKDGEVIIVDEHTGRTMQGRRWSDGLHQAVEAKEGVQIQNENQTLASITFQNYFRLYEKLAGMTGTADTEAFEFSSIYKLDTVVVPTNRPMIRKDLPDLVYMTEAEKIQAIIEDIKERTAKGQPVLVGTISIEKSELVSNELTKAGIKHNVLNAKFHANEAAIVAQAGYPAAVTIATNMAGRGTDIVLGGSWQAEVAALENPTAEQIEKIKADWQVRHDAVLEAGGLHIIGTERHESRRIDNQLRGRSGRQGDAGSSRFYLSMEDALMRIFASDRVSGMMRKLGMKPGEAIEHPWVTKAIANAQRKVESRNFDIRKQLLEYDDVANDQRRAIYSQRNELLDVSDVSETINSIREDVFKATIDAYIPPQSLEEMWDIPGLQERLKNDFDLDLPIAEWLDKEPELHEETLRERILAQSIEVYQRKEEVVGAEMMRHFEKGVMLQTLDSLWKEHLAAMDYLRQGIHLRGYAQKDPKQEYKRESFSMFAAMLESLKYEVIGTLSKVQVRMPEEVEELEQQRRMEAERLAQMQQLSHQDDDSAAAAALAAQTGERKVGRNDPCPCGSGKKYKQCHGRLQ.

Residues Q87, 105–109 (GEGKT), and D512 contribute to the ATP site. Residues 859 to 901 (HQDDDSAAAAALAAQTGERKVGRNDPCPCGSGKKYKQCHGRLQ) form a disordered region. The Zn(2+) site is built by C885, C887, C896, and H897. The segment covering 891 to 901 (KKYKQCHGRLQ) has biased composition (basic residues).

Belongs to the SecA family. In terms of assembly, monomer and homodimer. Part of the essential Sec protein translocation apparatus which comprises SecA, SecYEG and auxiliary proteins SecDF-YajC and YidC. Zn(2+) is required as a cofactor.

Its subcellular location is the cell inner membrane. The protein resides in the cytoplasm. The enzyme catalyses ATP + H2O + cellular proteinSide 1 = ADP + phosphate + cellular proteinSide 2.. Its function is as follows. Part of the Sec protein translocase complex. Interacts with the SecYEG preprotein conducting channel. Has a central role in coupling the hydrolysis of ATP to the transfer of proteins into and across the cell membrane, serving both as a receptor for the preprotein-SecB complex and as an ATP-driven molecular motor driving the stepwise translocation of polypeptide chains across the membrane. In Escherichia coli (strain 55989 / EAEC), this protein is Protein translocase subunit SecA.